The sequence spans 557 residues: ADP-ribosylation factor-binding protein GGA1 (557 aa).

The VHS domain occupies 29 to 165 (ACRSTLPEPD…LLKYKGYTFP (137 aa)). A GAT domain is found at 192 to 317 (ERAQAAKLEE…LLKRYKSIKG (126 aa)). At T348 the chain carries Phosphothreonine. S353, S357, S378, and S394 each carry phosphoserine. A GAE domain is found at 440-556 (AQSQRHILNQ…EESGTTSLPT (117 aa)).

As to quaternary structure, binds to ARF1 and ARF2.

It localises to the golgi apparatus. It is found in the trans-Golgi network. Functionally, may play a role in the regulation of membrane traffic through the trans-Golgi network. This Saccharomyces cerevisiae (strain ATCC 204508 / S288c) (Baker's yeast) protein is ADP-ribosylation factor-binding protein GGA1 (GGA1).